The primary structure comprises 406 residues: 4-hydroxy-3-methylbut-2-en-1-yl diphosphate synthase (ferredoxin) (406 aa).

Residues Cys315, Cys318, Cys349, and Glu356 each contribute to the [4Fe-4S] cluster site.

Belongs to the IspG family. [4Fe-4S] cluster is required as a cofactor.

The catalysed reaction is (2E)-4-hydroxy-3-methylbut-2-enyl diphosphate + 2 oxidized [2Fe-2S]-[ferredoxin] + H2O = 2-C-methyl-D-erythritol 2,4-cyclic diphosphate + 2 reduced [2Fe-2S]-[ferredoxin] + H(+). It participates in isoprenoid biosynthesis; isopentenyl diphosphate biosynthesis via DXP pathway; isopentenyl diphosphate from 1-deoxy-D-xylulose 5-phosphate: step 5/6. Functionally, converts 2C-methyl-D-erythritol 2,4-cyclodiphosphate (ME-2,4cPP) into 1-hydroxy-2-methyl-2-(E)-butenyl 4-diphosphate. This Gloeothece citriformis (strain PCC 7424) (Cyanothece sp. (strain PCC 7424)) protein is 4-hydroxy-3-methylbut-2-en-1-yl diphosphate synthase (ferredoxin).